Consider the following 255-residue polypeptide: Acetylglutamate kinase (255 aa).

Residues 40–41 (GG), Arg62, and Asn153 contribute to the substrate site.

The protein belongs to the acetylglutamate kinase family. ArgB subfamily.

Its subcellular location is the cytoplasm. It carries out the reaction N-acetyl-L-glutamate + ATP = N-acetyl-L-glutamyl 5-phosphate + ADP. It functions in the pathway amino-acid biosynthesis; L-arginine biosynthesis; N(2)-acetyl-L-ornithine from L-glutamate: step 2/4. Functionally, catalyzes the ATP-dependent phosphorylation of N-acetyl-L-glutamate. This chain is Acetylglutamate kinase, found in Bacillus cereus (strain 03BB102).